The sequence spans 535 residues: Dimethylaniline monooxygenase [N-oxide-forming] 2 (535 aa).

FAD is bound by residues 9-13, glutamate 32, 40-41, and 61-62; these read GAGVS, LW, and NT. Residues 60–61 and 195–198 contribute to the NADP(+) site; these read TN and SAAD. A Glycyl lysine isopeptide (Lys-Gly) (interchain with G-Cter in SUMO) cross-link involves residue lysine 492. Residues 510 to 530 traverse the membrane as a helical segment; it reads APVSFLIKVLGLLAIVLAFFF.

Belongs to the FMO family. The cofactor is FAD. Mg(2+) is required as a cofactor.

It is found in the microsome membrane. The protein localises to the endoplasmic reticulum membrane. In terms of biological role, catalyzes the oxidative metabolism of numerous xenobiotics, including mainly therapeutic drugs and insecticides that contain a soft nucleophile, most commonly nitrogen and sulfur and participates to their bioactivation. This chain is Dimethylaniline monooxygenase [N-oxide-forming] 2, found in Rattus norvegicus (Rat).